The primary structure comprises 207 residues: Serotonin N-acetyltransferase (207 aa).

The interval 1-29 (MSTPSVHCLKPSPLHLPSGIPGSPGRQRR) is disordered. The tract at residues 28-35 (RRHTLPAN) is YWHAZ-binding. Threonine 31 carries the phosphothreonine; by PKA modification. The 162-residue stretch at 35 to 196 (NEFRCLTPED…TFTEMHCSLR (162 aa)) folds into the N-acetyltransferase domain. Leucine 124 lines the substrate pocket. Acetyl-CoA is bound by residues 124–126 (LAV) and 132–137 (QQGKGS). Substrate is bound at residue methionine 159. Acetyl-CoA is bound at residue 168–170 (YQR). A Phosphoserine; by PKA modification is found at serine 205.

Belongs to the acetyltransferase family. AANAT subfamily. Monomer. Interacts with several 14-3-3 proteins, including YWHAB, YWHAE, YWHAG and YWHAZ, preferentially when phosphorylated at Thr-31. Phosphorylation on Ser-205 also allows binding to YWHAZ, but with a 10-fold lower affinity. The interaction with YWHAZ considerably increases affinity for arylalkylamines and acetyl-CoA and protects the enzyme from dephosphorylation and proteasomal degradation. It may also prevent thiol-dependent inactivation. The physiological stoichiometry of the interaction is not clear. In vitro studies show either 1:2 (i.e. 1 AANAT molecule per YWHAZ dimer) or 2:2. In terms of processing, cAMP-dependent phosphorylation on both N-terminal Thr-31 and C-terminal Ser-205 regulates AANAT activity by promoting interaction with 14-3-3 proteins. As to expression, highest expression in the pineal gland, followed by retina. Expressed at much lower levels in brainstem and pituitary gland. AANAT activity also detected at low levels in the olfactory lobe.

The protein localises to the cytoplasm. It carries out the reaction a 2-arylethylamine + acetyl-CoA = an N-acetyl-2-arylethylamine + CoA + H(+). It functions in the pathway aromatic compound metabolism; melatonin biosynthesis; melatonin from serotonin: step 1/2. Functionally, controls the night/day rhythm of melatonin production in the pineal gland. Catalyzes the N-acetylation of serotonin into N-acetylserotonin, the penultimate step in the synthesis of melatonin. In Ovis aries (Sheep), this protein is Serotonin N-acetyltransferase (AANAT).